The chain runs to 552 residues: Putative transport protein APL_0966 (552 aa).

The next 5 membrane-spanning stretches (helical) occupy residues 4–24, 29–49, 65–85, 95–115, and 161–181; these read IAII…IGHI, VGLG…CTHL, FGLI…FFAS, GFAV…HKLF, and IAYP…RIIF. RCK C-terminal domains lie at 190–275 and 277–360; these read QEFD…ILGE and ADVS…IIGD. 6 consecutive transmembrane segments (helical) span residues 370–390, 402–424, 438–458, 463–483, 492–512, and 529–549; these read MLPI…PLYI, AGGP…LYWF, IVLF…DTLL, LAWM…TGFV, YLSL…LAFA, and VYPL…ILLW.

This sequence belongs to the AAE transporter (TC 2.A.81) family. YidE subfamily.

Its subcellular location is the cell membrane. The polypeptide is Putative transport protein APL_0966 (Actinobacillus pleuropneumoniae serotype 5b (strain L20)).